Reading from the N-terminus, the 149-residue chain is Arginine repressor (149 aa).

This sequence belongs to the ArgR family.

The protein localises to the cytoplasm. It functions in the pathway amino-acid biosynthesis; L-arginine biosynthesis [regulation]. Its function is as follows. Regulates arginine biosynthesis genes. The sequence is that of Arginine repressor from Alkaliphilus metalliredigens (strain QYMF).